Consider the following 710-residue polypeptide: Polyribonucleotide nucleotidyltransferase (710 aa).

Mg(2+) is bound by residues Asp-491 and Asp-497. The region spanning 558–618 (PRIYKIQVKP…SAAQKAIEII (61 aa)) is the KH domain. The region spanning 628-696 (GRIYMGKVTR…ELGRVRLSRK (69 aa)) is the S1 motif domain.

The protein belongs to the polyribonucleotide nucleotidyltransferase family. The cofactor is Mg(2+).

The protein resides in the cytoplasm. The catalysed reaction is RNA(n+1) + phosphate = RNA(n) + a ribonucleoside 5'-diphosphate. Involved in mRNA degradation. Catalyzes the phosphorolysis of single-stranded polyribonucleotides processively in the 3'- to 5'-direction. This Thermodesulfovibrio yellowstonii (strain ATCC 51303 / DSM 11347 / YP87) protein is Polyribonucleotide nucleotidyltransferase.